A 137-amino-acid chain; its full sequence is Large ribosomal subunit protein uL16 (137 aa).

The protein belongs to the universal ribosomal protein uL16 family. Part of the 50S ribosomal subunit.

In terms of biological role, binds 23S rRNA and is also seen to make contacts with the A and possibly P site tRNAs. The chain is Large ribosomal subunit protein uL16 from Allorhizobium ampelinum (strain ATCC BAA-846 / DSM 112012 / S4) (Agrobacterium vitis (strain S4)).